We begin with the raw amino-acid sequence, 190 residues long: Guanylate kinase (190 aa).

A Guanylate kinase-like domain is found at 3–185 (NYIFIISAPS…SLEQLCKYFE (183 aa)). Residue 10 to 17 (APSGAGKS) coordinates ATP.

The protein belongs to the guanylate kinase family.

It localises to the cytoplasm. The catalysed reaction is GMP + ATP = GDP + ADP. Functionally, essential for recycling GMP and indirectly, cGMP. The protein is Guanylate kinase of Francisella tularensis subsp. holarctica (strain OSU18).